The chain runs to 494 residues: Hepatic triacylglycerol lipase (494 aa).

A signal peptide spans 1–21 (MGNHLQISVSLVLCIFIQSSA). Asparagine 79 carries N-linked (GlcNAc...) asparagine glycosylation. Serine 169 (nucleophile) is an active-site residue. The Charge relay system role is filled by aspartate 195. The interval 255–278 (CHFLELYKHIAEHGLNAITQTINC) is essential for determining substrate specificity. Catalysis depends on histidine 280, which acts as the Charge relay system. Residues 353–487 (YHYQFKIQFI…HPTQEKVFVK (135 aa)) enclose the PLAT domain. A glycan (N-linked (GlcNAc...) asparagine) is linked at asparagine 398.

The protein belongs to the AB hydrolase superfamily. Lipase family. Homodimer.

The protein localises to the secreted. The enzyme catalyses a triacylglycerol + H2O = a diacylglycerol + a fatty acid + H(+). The catalysed reaction is a 1-acyl-sn-glycero-3-phosphocholine + H2O = sn-glycerol 3-phosphocholine + a fatty acid + H(+). It carries out the reaction a 1,2-diacyl-sn-glycero-3-phosphocholine + H2O = a 2-acyl-sn-glycero-3-phosphocholine + a fatty acid + H(+). It catalyses the reaction 1,2-di-(9Z-octadecenoyl)-sn-glycerol + H2O = 2-(9Z-octadecenoyl)-glycerol + (9Z)-octadecenoate + H(+). The enzyme catalyses 1,2,3-tri-(9Z-octadecenoyl)-glycerol + H2O = 2,3-di-(9Z)-octadecenoyl-sn-glycerol + (9Z)-octadecenoate + H(+). The catalysed reaction is 1-(9Z-octadecenoyl)-sn-glycero-3-phospho-L-serine + H2O = sn-glycero-3-phospho-L-serine + (9Z)-octadecenoate + H(+). It carries out the reaction 1-hexadecanoyl-sn-glycero-3-phosphocholine + H2O = sn-glycerol 3-phosphocholine + hexadecanoate + H(+). It catalyses the reaction 1,3-di-(9Z-octadecenoyl)-glycerol + H2O = 3-(9Z-octadecenoyl)-sn-glycerol + (9Z)-octadecenoate + H(+). The enzyme catalyses 1,2,3-tri-(9Z-octadecenoyl)-glycerol + H2O = di-(9Z)-octadecenoylglycerol + (9Z)-octadecenoate + H(+). The catalysed reaction is 1,2-di-(9Z-octadecenoyl)-sn-glycero-3-phosphocholine + H2O = (9Z-octadecenoyl)-sn-glycero-3-phosphocholine + (9Z)-octadecenoate + H(+). It carries out the reaction 1,2,3-tributanoylglycerol + H2O = dibutanoylglycerol + butanoate + H(+). It catalyses the reaction 1,2-dihexadecanoyl-sn-glycero-3-phosphocholine + H2O = hexadecanoyl-sn-glycero-3-phosphocholine + hexadecanoate + H(+). With respect to regulation, phospholipase A1 and lysophospholipase activities are inhibited by annexin II. Its function is as follows. Catalyzes the hydrolysis of triglycerides and phospholipids present in circulating plasma lipoproteins, including chylomicrons, intermediate density lipoproteins (IDL), low density lipoproteins (LDL) of large size and high density lipoproteins (HDL), releasing free fatty acids (FFA) and smaller lipoprotein particles. Also exhibits lysophospholipase activity. Can hydrolyze both neutral lipid and phospholipid substrates but shows a greater binding affinity for neutral lipid substrates than phospholipid substrates. In native LDL, preferentially hydrolyzes the phosphatidylcholine species containing polyunsaturated fatty acids at sn-2 position. This Rattus norvegicus (Rat) protein is Hepatic triacylglycerol lipase (Lipc).